Here is a 314-residue protein sequence, read N- to C-terminus: Ribosomal RNA small subunit methyltransferase H 2 (314 aa).

S-adenosyl-L-methionine contacts are provided by residues 33 to 35 (AGH), D53, Y80, D101, and Q108. Residues 293 to 314 (KELEENSRSKSAKLRVFEKNDL) form a disordered region.

This sequence belongs to the methyltransferase superfamily. RsmH family.

It localises to the cytoplasm. The catalysed reaction is cytidine(1402) in 16S rRNA + S-adenosyl-L-methionine = N(4)-methylcytidine(1402) in 16S rRNA + S-adenosyl-L-homocysteine + H(+). Specifically methylates the N4 position of cytidine in position 1402 (C1402) of 16S rRNA. The polypeptide is Ribosomal RNA small subunit methyltransferase H 2 (Agathobacter rectalis (strain ATCC 33656 / DSM 3377 / JCM 17463 / KCTC 5835 / VPI 0990) (Eubacterium rectale)).